The chain runs to 177 residues: ATP synthase subunit b (177 aa).

The helical transmembrane segment at 29–49 (FFFVLAIFLIVLAVIGTFVVP) threads the bilayer.

The protein belongs to the ATPase B chain family. F-type ATPases have 2 components, F(1) - the catalytic core - and F(0) - the membrane proton channel. F(1) has five subunits: alpha(3), beta(3), gamma(1), delta(1), epsilon(1). F(0) has three main subunits: a(1), b(2) and c(10-14). The alpha and beta chains form an alternating ring which encloses part of the gamma chain. F(1) is attached to F(0) by a central stalk formed by the gamma and epsilon chains, while a peripheral stalk is formed by the delta and b chains.

The protein resides in the cell membrane. Its function is as follows. F(1)F(0) ATP synthase produces ATP from ADP in the presence of a proton or sodium gradient. F-type ATPases consist of two structural domains, F(1) containing the extramembraneous catalytic core and F(0) containing the membrane proton channel, linked together by a central stalk and a peripheral stalk. During catalysis, ATP synthesis in the catalytic domain of F(1) is coupled via a rotary mechanism of the central stalk subunits to proton translocation. In terms of biological role, component of the F(0) channel, it forms part of the peripheral stalk, linking F(1) to F(0). The protein is ATP synthase subunit b of Mycolicibacterium paratuberculosis (strain ATCC BAA-968 / K-10) (Mycobacterium paratuberculosis).